The chain runs to 374 residues: Phospho-2-dehydro-3-deoxyheptonate aldolase AMT16 (374 aa).

This sequence belongs to the class-I DAHP synthase family.

It carries out the reaction D-erythrose 4-phosphate + phosphoenolpyruvate + H2O = 7-phospho-2-dehydro-3-deoxy-D-arabino-heptonate + phosphate. The protein operates within mycotoxin biosynthesis. In terms of biological role, nonribosomal peptide synthetase; part of the gene clusters that mediate the biosynthesis of AM-toxins, host-selective toxins (HSTs) causing Alternaria blotch on apple, a worldwide distributed disease. AM-toxins are cyclic depsipeptides containing the 3 residues 2-hydroxy-isovaleric acid (2-HIV), dehydroalanine, L-alanine which are common for all 3 AM-toxins I to III. The fourth precursor is L-alpha-amino-methoxyphenyl-valeric acid (L-Amv) for AM-toxin I, L-alpha-amino-phenyl-valeric acid (L-Apv) for AM-toxin II, and L-alpha-amino-hydroxyphenyl-valeric acid (L-Ahv) for AM-toxin III. AM-toxins have two target sites for affecting susceptible apple cells; they cause invagination of the plasma membrane and electrolyte loss and chloroplast disorganization. The non-ribosomal peptide synthetase AMT1 contains 4 catalytic modules and is responsible for activation of each residue in AM-toxin. The aldo-keto reductase AMT2 catalyzes the conversion of 2-keto-isovaleric acid (2-KIV) to 2-hydroxy-isovaleric acid (2-HIV), one of the precursor residues incorporated by AMT1 during AM-toxin biosynthesis, by reduction of its ketone to an alcohol. The cytochrome P450 monooxygenase AMT3 and the thioesterase AMT4 are also important for AM-toxin production, but their exact function within the AM-toxin biosynthesis are not known yet. Up to 21 proteins (including AMT1 to AMT4) are predicted to be involved in AM-toxin biosynthesis since their expression ishighly up-regulated in AM-toxin-producing cultures. The chain is Phospho-2-dehydro-3-deoxyheptonate aldolase AMT16 from Alternaria alternata (Alternaria rot fungus).